We begin with the raw amino-acid sequence, 466 residues long: Neuraminidase (466 aa).

Over 1–8 the chain is Intravirion; that stretch reads MLPSTVQT. A helical membrane pass occupies residues 9–31; sequence LTLLLTSGGVLLSLYVSASLSYL. Positions 13–35 are involved in apical transport and lipid raft association; that stretch reads LTSGGVLLSLYVSASLSYLLYSD. Residues 32-466 are Virion surface-facing; sequence LYSDVLLKFS…DTVTGVDMAL (435 aa). The segment at 38 to 86 is hypervariable stalk region; the sequence is LKFSSTKTTAPTMSLECTNASNAQTVNHSATKEMTFPPPEPEWTYPRLS. 2 N-linked (GlcNAc...) asparagine; by host glycosylation sites follow: asparagine 56 and asparagine 64. 8 disulfides stabilise this stretch: cysteine 87–cysteine 420, cysteine 122–cysteine 127, cysteine 182–cysteine 229, cysteine 231–cysteine 236, cysteine 277–cysteine 291, cysteine 279–cysteine 289, cysteine 318–cysteine 337, and cysteine 424–cysteine 447. Residues 89 to 466 are head of neuraminidase; it reads GSTFQKALLI…DTVTGVDMAL (378 aa). Position 116 (arginine 116) interacts with substrate. Asparagine 144 is a glycosylation site (N-linked (GlcNAc...) asparagine; by host). Aspartate 149 acts as the Proton donor/acceptor in catalysis. Residue arginine 150 participates in substrate binding. 275 to 276 contacts substrate; sequence EE. Residue asparagine 284 is glycosylated (N-linked (GlcNAc...) asparagine; by host). Residue arginine 292 coordinates substrate. Residues aspartate 293, threonine 297, aspartate 324, and glycine 346 each contribute to the Ca(2+) site. Arginine 374 lines the substrate pocket. Tyrosine 409 functions as the Nucleophile in the catalytic mechanism.

This sequence belongs to the glycosyl hydrolase 34 family. In terms of assembly, homotetramer. It depends on Ca(2+) as a cofactor. Post-translationally, N-glycosylated.

It localises to the virion membrane. The protein resides in the host apical cell membrane. It catalyses the reaction Hydrolysis of alpha-(2-&gt;3)-, alpha-(2-&gt;6)-, alpha-(2-&gt;8)- glycosidic linkages of terminal sialic acid residues in oligosaccharides, glycoproteins, glycolipids, colominic acid and synthetic substrates.. Its activity is regulated as follows. Inhibited by the neuraminidase inhibitors zanamivir (Relenza) and oseltamivir (Tamiflu). These drugs interfere with the release of progeny virus from infected cells and are effective against all influenza strains. Resistance to neuraminidase inhibitors is quite rare. Catalyzes the removal of terminal sialic acid residues from viral and cellular glycoconjugates. Cleaves off the terminal sialic acids on the glycosylated HA during virus budding to facilitate virus release. Additionally helps virus spread through the circulation by further removing sialic acids from the cell surface. These cleavages prevent self-aggregation and ensure the efficient spread of the progeny virus from cell to cell. Otherwise, infection would be limited to one round of replication. Described as a receptor-destroying enzyme because it cleaves a terminal sialic acid from the cellular receptors. May facilitate viral invasion of the upper airways by cleaving the sialic acid moieties on the mucin of the airway epithelial cells. Likely to plays a role in the budding process through its association with lipid rafts during intracellular transport. May additionally display a raft-association independent effect on budding. Plays a role in the determination of host range restriction on replication and virulence. Sialidase activity in late endosome/lysosome traffic seems to enhance virus replication. This chain is Neuraminidase, found in Influenza B virus (strain B/Lee/1940).